We begin with the raw amino-acid sequence, 78 residues long: Pancreatic polypeptide prohormone (78 aa).

A signal peptide spans 1-19; that stretch reads LLLSTCVALLLQPPLGALG. Tyrosine 55 carries the post-translational modification Tyrosine amide.

Belongs to the NPY family.

The protein resides in the secreted. In terms of biological role, hormone secreted by pancreatic cells that acts as a regulator of pancreatic and gastrointestinal functions probably by signaling through the G protein-coupled receptor NPY4R2. The sequence is that of Pancreatic polypeptide prohormone (PPY) from Ovis aries (Sheep).